Reading from the N-terminus, the 279-residue chain is MSIISPQDVKKLREETNAGFGDCKKALSVAGGDFELAKKKLREMGIASAEKRLDRDAKEGRVFSYSNNIYAGLLLVSCETDFVALNHNFVNFGNSLIKELVESGIDSLTTSQELELKNLAATIKENIQVKKIFITKIQSNEFVKIYLHGEQSKIGVLVKLKVNDFSKTEDKIFKNFAMDLALHVAAFAPVYLRNDDVCPNYIKEQEEIFTKQLESSGKPESIIKGIVAGKIKKHLAEISLLEQSFVKNDKITVKEMLEEISKAISSKVEMVEFKYLRIG.

The tract at residues T80 to V83 is involved in Mg(2+) ion dislocation from EF-Tu.

It belongs to the EF-Ts family.

Its subcellular location is the cytoplasm. In terms of biological role, associates with the EF-Tu.GDP complex and induces the exchange of GDP to GTP. It remains bound to the aminoacyl-tRNA.EF-Tu.GTP complex up to the GTP hydrolysis stage on the ribosome. The protein is Elongation factor Ts (tsf) of Borreliella burgdorferi (strain ATCC 35210 / DSM 4680 / CIP 102532 / B31) (Borrelia burgdorferi).